The sequence spans 689 residues: Glycine--tRNA ligase beta subunit (689 aa).

It belongs to the class-II aminoacyl-tRNA synthetase family. Tetramer of two alpha and two beta subunits.

The protein resides in the cytoplasm. It carries out the reaction tRNA(Gly) + glycine + ATP = glycyl-tRNA(Gly) + AMP + diphosphate. The polypeptide is Glycine--tRNA ligase beta subunit (Enterobacter sp. (strain 638)).